The primary structure comprises 426 residues: Proline--tRNA ligase (426 aa).

It belongs to the class-II aminoacyl-tRNA synthetase family. ProS type 2 subfamily. In terms of assembly, homodimer.

It is found in the cytoplasm. It catalyses the reaction tRNA(Pro) + L-proline + ATP = L-prolyl-tRNA(Pro) + AMP + diphosphate. Its function is as follows. Catalyzes the attachment of proline to tRNA(Pro) in a two-step reaction: proline is first activated by ATP to form Pro-AMP and then transferred to the acceptor end of tRNA(Pro). This chain is Proline--tRNA ligase, found in Rickettsia peacockii (strain Rustic).